A 612-amino-acid polypeptide reads, in one-letter code: MICLFGNCNCQTGIFGLYDYVSFLYHSPSSCRVRLVLSLPASPNHMEEQSPKFESSFPRRTSEGPVDDVGKSPPASFYRELLANKAQQPQLSEDEEDHNPKDFLFKEDSEDELLIPDSENHNSSSTSPRKFKVENIRWGSDTLNGSILPLNSQGSNLQSLLSNVGELEHLLSKDVAKHSKYLKEQSSKVEKARANIVTNLTRLSLVLSSIFNTYQAKAQDKQAILDKIEEWEDEKKSLLDDMKEVLSTDDNADGETHKFLELASESINVENEIEALETRLKQLKIKQRTLKNECFQSQGIIESRLSNFVQAVEKIEMRERKSIEQVVQQLSENQLGYWNDNLALEVMNGLTINPGDISLVEEYEPVDILKQVESLEKPTIAADYHLPKNTNKQASRFTRQLLEFNYKCQPKLNVYPVVGLITKELKEDSAKEQEYKHRYDQVTHTLSALKDSFALIYHTEQQLQSITQSTQDLKDFQSLMNQMVESLLKTHSEADQYNLYLAKDVLAQEISIIHQALNKLNQSTEYSSVESDNVKNHDGLLFQTFSKAQERTKLPSIKSATSIRYAPSLYNSLSPTSTSKTTAKGEVNYDAGINKYTKVKEVLRSGKGNKDE.

The disordered stretch occupies residues 44–72 (NHMEEQSPKFESSFPRRTSEGPVDDVGKS). Positions 214–296 (YQAKAQDKQA…QRTLKNECFQ (83 aa)) form a coiled coil.

It belongs to the ATG28 family. Interacts with ATG35.

The protein resides in the cytoplasm. It is found in the vacuole membrane. The protein localises to the cytoplasmic vesicle membrane. Required for the autophagic degradation of peroxisomes called pexophagy, but not essential for general autophagy. Involved in resistance to elevated pH. In Komagataella phaffii (strain GS115 / ATCC 20864) (Yeast), this protein is Autophagy-related protein 28 (ATG28).